The following is a 206-amino-acid chain: dCTP deaminase, dUMP-forming (206 aa).

DCTP-binding positions include 117-122 (RSSFGR), Asp135, 143-145 (TLE), Gln163, Tyr177, Lys184, and Gln188. Catalysis depends on Glu145, which acts as the Proton donor/acceptor.

Belongs to the dCTP deaminase family. Homotrimer.

It carries out the reaction dCTP + 2 H2O = dUMP + NH4(+) + diphosphate. Its pathway is pyrimidine metabolism; dUMP biosynthesis; dUMP from dCTP: step 1/1. Functionally, bifunctional enzyme that catalyzes both the deamination of dCTP to dUTP and the hydrolysis of dUTP to dUMP without releasing the toxic dUTP intermediate. The sequence is that of dCTP deaminase, dUMP-forming from Methanococcus maripaludis (strain DSM 14266 / JCM 13030 / NBRC 101832 / S2 / LL).